The following is a 573-amino-acid chain: DNA polymerase lambda (573 aa).

Residues 35–131 (DARGWLSSLR…KLTDTDGFSL (97 aa)) form the BRCT domain. Positions 126-235 (TDGFSLSSPK…GPDPAPEALG (110 aa)) are disordered. The segment covering 127–149 (DGFSLSSPKRSLNEPQPSKSGQD) has biased composition (polar residues). Residues 263 to 277 (KAYNVQGDKWRALGY) form a DNA-binding region. K310 acts as the Schiff-base intermediate with DNA in catalysis. Residues 343 to 346 (GTKT) form a DNA-binding region. DCTP-binding positions include R384, 415–418 (SFRR), and 424–427 (GDVD). The interval 418–427 (RGKVTCGDVD) is involved in primer binding. Mn(2+) contacts are provided by D425, D427, and D488. Positions 464–503 (ENGQQQKYLGVCRLPGAGQRHRRLDIIVVPYSEFACALLY) are DNA-binding. N511 is a dCTP binding site.

This sequence belongs to the DNA polymerase type-X family. In terms of assembly, interacts with PCNA. Interacts with PAXX; promoting POLL recruitment to double-strand breaks (DSBs) and stimulation of the end-filling activity of POLL. Interacts with XRCC4; promoting POLL recruitment to double-strand breaks (DSBs) and stimulation of the end-filling activity of POLL. Interacts with NHEJ1/XLF; promoting POLL recruitment to double-strand breaks (DSBs) and stimulation of the end-filling activity of POLL. Mn(2+) is required as a cofactor.

The protein resides in the nucleus. It catalyses the reaction DNA(n) + a 2'-deoxyribonucleoside 5'-triphosphate = DNA(n+1) + diphosphate. DNA polymerase that functions in several pathways of DNA repair. Involved in base excision repair (BER) responsible for repair of lesions that give rise to abasic (AP) sites in DNA. Also contributes to DNA double-strand break repair by non-homologous end joining and homologous recombination. Has both template-dependent and template-independent (terminal transferase) DNA polymerase activities. Also has a 5'-deoxyribose-5-phosphate lyase (dRP lyase) activity. The sequence is that of DNA polymerase lambda from Rattus norvegicus (Rat).